A 273-amino-acid chain; its full sequence is Putative inactive beta-glucuronidase protein GUSBP11 (273 aa).

Residues 1–20 (MTAAETGRGKPRLGGGSGLG) form a disordered region.

The protein belongs to the glycosyl hydrolase 2 family.

The chain is Putative inactive beta-glucuronidase protein GUSBP11 (GUSBP11) from Homo sapiens (Human).